The chain runs to 344 residues: UPF0283 membrane protein YcjF (344 aa).

The next 3 helical transmembrane spans lie at 70–90 (MVMG…VQWT), 100–120 (VALG…GSVV), and 213–233 (ESTL…FIAW).

This sequence belongs to the UPF0283 family.

Its subcellular location is the cell inner membrane. This Shigella dysenteriae serotype 1 (strain Sd197) protein is UPF0283 membrane protein YcjF.